Reading from the N-terminus, the 452-residue chain is Acetyl-CoA decarbonylase/synthase complex subunit delta (452 aa).

Belongs to the CdhD family. In terms of assembly, heterodimer of delta and gamma chains. The ACDS complex is made up of alpha, epsilon, beta, gamma and delta chains with a probable stoichiometry of (alpha(2)epsilon(2))(4)-beta(8)-(gamma(1)delta(1))(8).

Its function is as follows. Part of a complex that catalyzes the reversible cleavage of acetyl-CoA, allowing autotrophic growth from CO(2). Probably maintains the overall quaternary structure of the ACDS complex. This chain is Acetyl-CoA decarbonylase/synthase complex subunit delta, found in Archaeoglobus fulgidus (strain ATCC 49558 / DSM 4304 / JCM 9628 / NBRC 100126 / VC-16).